A 532-amino-acid chain; its full sequence is BEL1-like homeodomain protein 6 (532 aa).

The interval 144–160 (SKYLKAAQQLLDEAVNV) is SR/KY domain. Residues 170–203 (EGDKNNENPQEPNQSTQDSSTNPPADISQSERQE) form a disordered region. A compositionally biased stretch (polar residues) spans 176–197 (ENPQEPNQSTQDSSTNPPADIS). Positions 200–271 (ERQEMQSKLT…SLRDAISGQI (72 aa)) are BELL domain. The homeobox DNA-binding region spans 314-376 (AWRPQRGLPE…NARVRLWKPM (63 aa)). Residues 385–434 (FTENDSNSSSENTPKMSEIGPVAADDEDRAREFSQDQTKPDHGHGYGEET) are disordered. The span at 412–434 (DRAREFSQDQTKPDHGHGYGEET) shows a compositional bias: basic and acidic residues.

The protein belongs to the TALE/BELL homeobox family. May form heterodimeric complexes with TALE/KNOX proteins. Interacts with OFP2, OFP4, and OFP5.

It localises to the nucleus. This is BEL1-like homeodomain protein 6 (BLH6) from Arabidopsis thaliana (Mouse-ear cress).